The sequence spans 142 residues: Large ribosomal subunit protein uL13 (142 aa).

Belongs to the universal ribosomal protein uL13 family. As to quaternary structure, part of the 50S ribosomal subunit.

In terms of biological role, this protein is one of the early assembly proteins of the 50S ribosomal subunit, although it is not seen to bind rRNA by itself. It is important during the early stages of 50S assembly. The sequence is that of Large ribosomal subunit protein uL13 from Actinobacillus succinogenes (strain ATCC 55618 / DSM 22257 / CCUG 43843 / 130Z).